We begin with the raw amino-acid sequence, 259 residues long: NH(3)-dependent NAD(+) synthetase (259 aa).

33–40 (GLSGGIDS) contacts ATP. Residue D39 participates in Mg(2+) binding. Residue R119 participates in deamido-NAD(+) binding. T139 provides a ligand contact to ATP. Mg(2+) is bound at residue E144. 2 residues coordinate deamido-NAD(+): K152 and D159. The ATP site is built by K168 and S190. Deamido-NAD(+) is bound at residue 249–250 (HK).

This sequence belongs to the NAD synthetase family. In terms of assembly, homodimer.

It carries out the reaction deamido-NAD(+) + NH4(+) + ATP = AMP + diphosphate + NAD(+) + H(+). Its pathway is cofactor biosynthesis; NAD(+) biosynthesis; NAD(+) from deamido-NAD(+) (ammonia route): step 1/1. In terms of biological role, catalyzes the ATP-dependent amidation of deamido-NAD to form NAD. Uses ammonia as a nitrogen source. The chain is NH(3)-dependent NAD(+) synthetase from Methanocaldococcus jannaschii (strain ATCC 43067 / DSM 2661 / JAL-1 / JCM 10045 / NBRC 100440) (Methanococcus jannaschii).